Consider the following 603-residue polypeptide: Serine protease 56 (603 aa).

Positions 1–19 (MLLAVLLLLPLPSSWFAHG) are cleaved as a signal peptide. The segment at 64–96 (SHECRGSGRPRPQALLQDPPEPGPCGERRPSTA) is disordered. An N-linked (GlcNAc...) asparagine glycan is attached at Asn97. The 233-residue stretch at 105-337 (IVGGSAAPPG…FKDWLQEQMS (233 aa)) folds into the Peptidase S1 domain. Cys130 and Cys146 are oxidised to a cystine. Active-site charge relay system residues include His145 and Asp191. 3 disulfides stabilise this stretch: Cys225–Cys292, Cys256–Cys271, and Cys282–Cys313. The active-site Charge relay system is Ser286. 2 disordered regions span residues 442 to 474 (PARELRLHSGSRAAGTRFPKRRPEPRGEANGCP) and 573 to 603 (EGPWMDVGQGPGLERKGHHPLNPQVPPARQP).

It belongs to the peptidase S1 family. Expressed neural retina, cornea, sclera and optic nerve.

Functionally, serine protease required during eye development. This chain is Serine protease 56 (PRSS56), found in Homo sapiens (Human).